The sequence spans 208 residues: 3-demethoxyubiquinol 3-hydroxylase (208 aa).

Glutamate 57, glutamate 87, histidine 90, glutamate 139, glutamate 171, and histidine 174 together coordinate Fe cation.

It belongs to the COQ7 family. Fe cation serves as cofactor.

It is found in the cell membrane. It carries out the reaction a 5-methoxy-2-methyl-3-(all-trans-polyprenyl)benzene-1,4-diol + AH2 + O2 = a 3-demethylubiquinol + A + H2O. Its pathway is cofactor biosynthesis; ubiquinone biosynthesis. Catalyzes the hydroxylation of 2-nonaprenyl-3-methyl-6-methoxy-1,4-benzoquinol during ubiquinone biosynthesis. In Janthinobacterium sp. (strain Marseille) (Minibacterium massiliensis), this protein is 3-demethoxyubiquinol 3-hydroxylase.